Reading from the N-terminus, the 411-residue chain is UPF0261 protein SACE_5696 (411 aa).

This sequence belongs to the UPF0261 family.

This chain is UPF0261 protein SACE_5696, found in Saccharopolyspora erythraea (strain ATCC 11635 / DSM 40517 / JCM 4748 / NBRC 13426 / NCIMB 8594 / NRRL 2338).